We begin with the raw amino-acid sequence, 316 residues long: Ribosomal protein L11 methyltransferase (316 aa).

Residues T157, G178, D200, and N243 each contribute to the S-adenosyl-L-methionine site.

Belongs to the methyltransferase superfamily. PrmA family.

Its subcellular location is the cytoplasm. The catalysed reaction is L-lysyl-[protein] + 3 S-adenosyl-L-methionine = N(6),N(6),N(6)-trimethyl-L-lysyl-[protein] + 3 S-adenosyl-L-homocysteine + 3 H(+). In terms of biological role, methylates ribosomal protein L11. The protein is Ribosomal protein L11 methyltransferase of Streptococcus pneumoniae serotype 2 (strain D39 / NCTC 7466).